Reading from the N-terminus, the 99-residue chain is Protein Frey (99 aa).

Residues 7-29 (GALYPRAGLSLFLLYLVLAAVLL) form a helical membrane-spanning segment. The interval 65 to 88 (PKHPWPRGPRPLLSRAQQRKRDGP) is disordered.

Interacts with SPPL2C (via active sites); the interaction stabilizes FREY1 protein and inhibits SPPL2C proteolytic activity. Interacts with IZUMO1; the interaction retains IZUMO1 at the endoplasmic reticulum membrane and coordinates IZUMO1 complex assembly.

The protein localises to the endoplasmic reticulum membrane. In terms of biological role, key regulator for male fertility expressed transiently in round spermatids where it recruits IZUMO1 at the endoplasmic reticulum (ER) membrane and coordinates the oolemmal binding multimeric complex (IZUMO1 complex) assembly. Upon complete assembly of the IZUMO1 complex, its ER retention is released, facilitating IZUMO1 complex export to the acrosome. Through the interaction with SPPL2C, inhibits its intramembrane protease activity directly accessing the catalytic center of an I-CLiP. In Ailuropoda melanoleuca (Giant panda), this protein is Protein Frey.